We begin with the raw amino-acid sequence, 202 residues long: Peptidyl-tRNA hydrolase (202 aa).

Tyrosine 19 provides a ligand contact to tRNA. The active-site Proton acceptor is histidine 24. Positions 70, 72, and 118 each coordinate tRNA.

This sequence belongs to the PTH family. As to quaternary structure, monomer.

It is found in the cytoplasm. The enzyme catalyses an N-acyl-L-alpha-aminoacyl-tRNA + H2O = an N-acyl-L-amino acid + a tRNA + H(+). Functionally, hydrolyzes ribosome-free peptidyl-tRNAs (with 1 or more amino acids incorporated), which drop off the ribosome during protein synthesis, or as a result of ribosome stalling. Catalyzes the release of premature peptidyl moieties from peptidyl-tRNA molecules trapped in stalled 50S ribosomal subunits, and thus maintains levels of free tRNAs and 50S ribosomes. The sequence is that of Peptidyl-tRNA hydrolase from Prochlorococcus marinus (strain NATL2A).